Here is a 69-residue protein sequence, read N- to C-terminus: Guanine nucleotide-binding protein G(I)/G(S)/G(O) subunit gamma-T2 (69 aa).

Cysteine methyl ester is present on cysteine 66. A lipid anchor (S-farnesyl cysteine) is attached at cysteine 66. Positions valine 67–serine 69 are cleaved as a propeptide — removed in mature form.

It belongs to the G protein gamma family. In terms of assembly, g proteins are composed of 3 units, alpha, beta and gamma.

Its subcellular location is the cell membrane. Functionally, guanine nucleotide-binding proteins (G proteins) are involved as a modulator or transducer in various transmembrane signaling systems. The beta and gamma chains are required for the GTPase activity, for replacement of GDP by GTP, and for G protein-effector interaction. The polypeptide is Guanine nucleotide-binding protein G(I)/G(S)/G(O) subunit gamma-T2 (Gngt2) (Mus musculus (Mouse)).